Reading from the N-terminus, the 289-residue chain is 4-diphosphocytidyl-2-C-methyl-D-erythritol kinase (289 aa).

Residue K11 is part of the active site. 93–103 (PLAAGLAGGSA) contributes to the ATP binding site. D135 is an active-site residue.

This sequence belongs to the GHMP kinase family. IspE subfamily.

It catalyses the reaction 4-CDP-2-C-methyl-D-erythritol + ATP = 4-CDP-2-C-methyl-D-erythritol 2-phosphate + ADP + H(+). It functions in the pathway isoprenoid biosynthesis; isopentenyl diphosphate biosynthesis via DXP pathway; isopentenyl diphosphate from 1-deoxy-D-xylulose 5-phosphate: step 3/6. Functionally, catalyzes the phosphorylation of the position 2 hydroxy group of 4-diphosphocytidyl-2C-methyl-D-erythritol. The polypeptide is 4-diphosphocytidyl-2-C-methyl-D-erythritol kinase (Thermoanaerobacter pseudethanolicus (strain ATCC 33223 / 39E) (Clostridium thermohydrosulfuricum)).